A 159-amino-acid chain; its full sequence is 17 kDa surface antigen (159 aa).

A signal peptide spans 1-19 (MKLLSKIMIIALAASMLQA). Residue Cys-20 is the site of N-palmitoyl cysteine attachment. The S-diacylglycerol cysteine moiety is linked to residue Cys-20.

Belongs to the rickettsiale 17 kDa surface antigen family.

Its subcellular location is the cell outer membrane. The chain is 17 kDa surface antigen (omp) from Rickettsia prowazekii (strain Madrid E).